We begin with the raw amino-acid sequence, 199 residues long: Probable GTP-binding protein EngB (199 aa).

One can recognise an EngB-type G domain in the interval 28 to 199 (DLPEIALAGR…DSWDAILEQV (172 aa)). Residues 36–43 (GRSNVGKS), 63–67 (GKTQL), 81–84 (DVPG), 148–151 (TKAD), and 180–182 (FSS) each bind GTP. Mg(2+) contacts are provided by Ser43 and Thr65.

The protein belongs to the TRAFAC class TrmE-Era-EngA-EngB-Septin-like GTPase superfamily. EngB GTPase family. Requires Mg(2+) as cofactor.

In terms of biological role, necessary for normal cell division and for the maintenance of normal septation. In Streptococcus pyogenes serotype M6 (strain ATCC BAA-946 / MGAS10394), this protein is Probable GTP-binding protein EngB.